The chain runs to 499 residues: Putative DUF21 domain-containing protein At1g03270 (499 aa).

The Extracellular segment spans residues 1 to 32 (MVVLSTLALVRAAYSLNSFVFEAEDIRFGSPW). One can recognise a CNNM transmembrane domain in the interval 29 to 211 (GSPWWFVVVG…GKGGELTHEE (183 aa)). Residues 33–53 (WFVVVGVACFLVLFAGIMSGL) traverse the membrane as a helical segment. Residues 54–91 (TLGLMSLGLVELEILQQSGSSAEKKQAAAILPVVKKQH) are Cytoplasmic-facing. A helical membrane pass occupies residues 92–112 (QLLVTLLLCNAAAMEALPICL). The Extracellular segment spans residues 113-114 (DK). A helical transmembrane segment spans residues 115 to 135 (IFHPFVAVLLSVTFVLAFGEI). Residues 136–145 (IPQAICSRYG) are Cytoplasmic-facing. Residues 146 to 166 (LAVGANFLWLVRILMIICYPI) form a helical membrane-spanning segment. Topologically, residues 167–499 (AYPIGKVLDA…TEPLLAESDR (333 aa)) are extracellular. Residue N181 is glycosylated (N-linked (GlcNAc...) asparagine). 3 consecutive CBS domains span residues 230 to 291 (MTPI…EAPV), 295 to 359 (SIRK…SNLT), and 365 to 431 (HESH…IVDE). N357, N391, and N484 each carry an N-linked (GlcNAc...) asparagine glycan.

It localises to the membrane. The polypeptide is Putative DUF21 domain-containing protein At1g03270 (CBSDUF4) (Arabidopsis thaliana (Mouse-ear cress)).